A 1281-amino-acid polypeptide reads, in one-letter code: Zinc finger transcription factor Trps1 (1281 aa).

Residues 1 to 198 form a disordered region; it reads MVRKKNPPLR…VPSDGGVRLN (198 aa). Residue Lys-29 forms a Glycyl lysine isopeptide (Lys-Gly) (interchain with G-Cter in SUMO2) linkage. Residues 40–49 show a composition bias toward polar residues; sequence DQMSENTDQS. Positions 53 to 63 are enriched in basic and acidic residues; the sequence is ELNHKEEHSLH. Lys-76 is covalently cross-linked (Glycyl lysine isopeptide (Lys-Gly) (interchain with G-Cter in SUMO2)). Phosphoserine occurs at positions 90 and 127. A compositionally biased stretch (basic and acidic residues) spans 148–162; the sequence is LETKEDQKMSPKATE. Polar residues predominate over residues 163-189; it reads ETGQAQSGQANCQGLSPVSVASKNPQV. Phosphoserine is present on residues Ser-178 and Ser-216. The C2H2-type 1; atypical zinc-finger motif lies at 222–247; sequence FKCNICGYGYYGNDPTDLIKHFRKYH. Residue Lys-263 forms a Glycyl lysine isopeptide (Lys-Gly) (interchain with G-Cter in SUMO2) linkage. The C2H2-type 2; atypical zinc finger occupies 333 to 358; sequence FRCKFCNFTYMGNSSTELEQHFLQTH. Residues 365–394 form a disordered region; the sequence is SLPSSEVAKPSEKNSNKSIPALQSSDSGDL. The segment covering 380 to 391 has biased composition (polar residues); sequence NKSIPALQSSDS. Glycyl lysine isopeptide (Lys-Gly) (interchain with G-Cter in SUMO2) cross-links involve residues Lys-418, Lys-457, Lys-474, and Lys-488. The segment at 483–512 is disordered; it reads QNDLAKSSEGETMTKTDKSSSGAKKKDFSS. Positions 488-512 are enriched in basic and acidic residues; sequence KSSEGETMTKTDKSSSGAKKKDFSS. The C2H2-type 3; atypical zinc-finger motif lies at 614-637; that stretch reads HQCHQCSFTTPDVDVLLFHYESVH. A mediates interaction with GLI3 region spans residues 635–819; that stretch reads SVHESQASDV…SLGLLTPVSG (185 aa). Lys-645 is covalently cross-linked (Glycyl lysine isopeptide (Lys-Gly) (interchain with G-Cter in SUMO2)). 2 C2H2-type zinc fingers span residues 666 to 689 and 692 to 715; these read HSCTKCDFITQVEEEISRHYRRAH and YKCRQCSFTAADTQSLLEHFNTVH. A Glycyl lysine isopeptide (Lys-Gly) (interchain with G-Cter in SUMO2) cross-link involves residue Lys-737. Position 751 is a phosphothreonine (Thr-751). Lys-755 is covalently cross-linked (Glycyl lysine isopeptide (Lys-Gly) (interchain with G-Cter in SUMO2)). Residue Lys-766 forms a Glycyl lysine isopeptide (Lys-Gly) (interchain with G-Cter in SUMO1); alternate linkage. Lys-766 participates in a covalent cross-link: Glycyl lysine isopeptide (Lys-Gly) (interchain with G-Cter in SUMO2); alternate. Residues Lys-825, Lys-850, Lys-877, and Lys-879 each participate in a glycyl lysine isopeptide (Lys-Gly) (interchain with G-Cter in SUMO2) cross-link. Residues 856–887 form a disordered region; it reads APAGGEKSGALPQQYPASGENKSKDESQSLLR. Residues 896–920 form a GATA-type zinc finger; that stretch reads CANCLTTKTSLWRKNANGGYVCNAC. Glycyl lysine isopeptide (Lys-Gly) (interchain with G-Cter in SUMO2) cross-links involve residues Lys-925, Lys-937, and Lys-965. Over residues 961 to 977 the composition is skewed to polar residues; sequence EQLNKQQRGSNEEQVNG. The interval 961–1000 is disordered; sequence EQLNKQQRGSNEEQVNGSPLERRSEDHLTESHQREIPLPS. Ser-978 carries the phosphoserine modification. Residues 980–995 show a composition bias toward basic and acidic residues; it reads LERRSEDHLTESHQRE. Residues 985–1184 form a mediates interaction with RNF4 region; that stretch reads EDHLTESHQR…PTANGASKEK (200 aa). Glycyl lysine isopeptide (Lys-Gly) (interchain with G-Cter in SUMO2) cross-links involve residues Lys-1003, Lys-1012, Lys-1030, and Lys-1040. The disordered stretch occupies residues 1039–1080; it reads IKSPQESTGDPGNSSSVSEGKGSSERGSPIEKYMRPAKHPNY. A compositionally biased stretch (polar residues) spans 1040–1049; it reads KSPQESTGDP. Residue Ser-1041 is modified to Phosphoserine. Residues 1050–1059 show a composition bias toward low complexity; sequence GNSSSVSEGK. The segment covering 1060 to 1072 has biased composition (basic and acidic residues); the sequence is GSSERGSPIEKYM. Phosphoserine is present on Ser-1066. A Glycyl lysine isopeptide (Lys-Gly) (interchain with G-Cter in SUMO2) cross-link involves residue Lys-1070. Ser-1085 is modified (phosphoserine). Positions 1163–1281 are transcriptional repressor domain; sequence PLDLAIKHSR…QVEKNGKPKE (119 aa). A disordered region spans residues 1168–1196; that stretch reads IKHSRPGPTANGASKEKTKAPPNVKNEGP. Glycyl lysine isopeptide (Lys-Gly) (interchain with G-Cter in SUMO2); alternate cross-links involve residues Lys-1192 and Lys-1201. Residues Lys-1192 and Lys-1201 each participate in a glycyl lysine isopeptide (Lys-Gly) (interchain with G-Cter in SUMO); alternate cross-link. Residue Lys-1201 forms a Glycyl lysine isopeptide (Lys-Gly) (interchain with G-Cter in SUMO1); alternate linkage. C2H2-type zinc fingers lie at residues 1215–1237 and 1243–1267; these read TKCVHCGIVFLDEVMYALHMSCH and FQCSICQHLCTDKYDFTTHIQRGLH.

Interacts with RNF4; regulates TRPS1 repressor activity. Interacts specifically with the activator form of GLI3 (GLI3A) but not with the repressor form (GLI3R). Sumoylated. Sumoylation in the repressor domain inhibits the transcription repression activity. Sumoylation on Lys-1201 is the major site. Appears to be sumoylated on multiple sites. In terms of tissue distribution, ubiquitously expressed in the adult. Found in fetal brain, lung, kidney, liver, spleen and thymus. More highly expressed in androgen-dependent than in androgen-independent prostate cancer cells.

The protein resides in the nucleus. In terms of biological role, transcriptional repressor. Binds specifically to GATA sequences and represses expression of GATA-regulated genes at selected sites and stages in vertebrate development. Regulates chondrocyte proliferation and differentiation. Executes multiple functions in proliferating chondrocytes, expanding the region of distal chondrocytes, activating proliferation in columnar cells and supporting the differentiation of columnar into hypertrophic chondrocytes. The chain is Zinc finger transcription factor Trps1 (TRPS1) from Homo sapiens (Human).